We begin with the raw amino-acid sequence, 165 residues long: Phosphopantetheine adenylyltransferase (165 aa).

Threonine 9 contacts substrate. Residues 9–10 (TF) and histidine 17 each bind ATP. Residues lysine 41, leucine 73, and arginine 87 each coordinate substrate. ATP-binding positions include 88–90 (GLR), glutamate 98, and 123–129 (YQFISGT).

It belongs to the bacterial CoaD family. In terms of assembly, homohexamer. Mg(2+) serves as cofactor.

It localises to the cytoplasm. The catalysed reaction is (R)-4'-phosphopantetheine + ATP + H(+) = 3'-dephospho-CoA + diphosphate. The protein operates within cofactor biosynthesis; coenzyme A biosynthesis; CoA from (R)-pantothenate: step 4/5. In terms of biological role, reversibly transfers an adenylyl group from ATP to 4'-phosphopantetheine, yielding dephospho-CoA (dPCoA) and pyrophosphate. This chain is Phosphopantetheine adenylyltransferase, found in Burkholderia vietnamiensis (strain G4 / LMG 22486) (Burkholderia cepacia (strain R1808)).